The chain runs to 63 residues: Large ribosomal subunit protein bL28c (63 aa).

The protein belongs to the bacterial ribosomal protein bL28 family.

The protein localises to the plastid. The protein resides in the chloroplast. The chain is Large ribosomal subunit protein bL28c (rpl28) from Porphyra purpurea (Red seaweed).